We begin with the raw amino-acid sequence, 137 residues long: Small heat shock protein IbpA (137 aa).

In terms of domain architecture, sHSP spans 28-137 (NQSNGGYPPY…SLKPRRIEIK (110 aa)).

This sequence belongs to the small heat shock protein (HSP20) family. In terms of assembly, monomer. Forms homomultimers of about 100-150 subunits at optimal growth temperatures. Conformation changes to monomers at high temperatures or high ionic concentrations.

The protein resides in the cytoplasm. Functionally, associates with aggregated proteins, together with IbpB, to stabilize and protect them from irreversible denaturation and extensive proteolysis during heat shock and oxidative stress. Aggregated proteins bound to the IbpAB complex are more efficiently refolded and reactivated by the ATP-dependent chaperone systems ClpB and DnaK/DnaJ/GrpE. Its activity is ATP-independent. This Yersinia pseudotuberculosis serotype O:1b (strain IP 31758) protein is Small heat shock protein IbpA.